The primary structure comprises 494 residues: MPAPAAKDQAWEAVIGLETHVQLGTDSKIFTAASTTFGDEPNTHIDPVVCGLPGTLPVLNQKVLEYAVKAAMALNLNIAEHSKFDRKQYFYPDLPKNYQISQYDEPIAEEGCIEVEVAEKGKDTYLKTIGIERLHMEEDAGKLVHAGSDRLAGSTHSLVDYNRAGVALAEIVSKPDLRTGREAAEYASEIRRIMRYLGVSDGNMQEGSLRCDVNISVRRGPDAPFGTKVEIKNMNSFSAIQKACEYEIKRQIKAYETGEPIVQETRLWDEGKQLTKSMRSKEGASDYRYFPDPDLGPIEVSADQRESWRAELPELPAAKRHRYADELGLSQYDARVLTDERPMADYFEAVVGAGADAKLAANWITGDIAAHVNSNRLSYAELPFRPEKLAEMVQLIDGGKISGKIAKEILPELLEKGGSPKAIVDERGLGIISDPAAIEAIVDELLGAHPDEVEAFRGGKTKLQGFFVGQLMKKTGGKADPKLANQILSKKLKV.

This sequence belongs to the GatB/GatE family. GatB subfamily. In terms of assembly, heterotrimer of A, B and C subunits.

The catalysed reaction is L-glutamyl-tRNA(Gln) + L-glutamine + ATP + H2O = L-glutaminyl-tRNA(Gln) + L-glutamate + ADP + phosphate + H(+). It carries out the reaction L-aspartyl-tRNA(Asn) + L-glutamine + ATP + H2O = L-asparaginyl-tRNA(Asn) + L-glutamate + ADP + phosphate + 2 H(+). Its function is as follows. Allows the formation of correctly charged Asn-tRNA(Asn) or Gln-tRNA(Gln) through the transamidation of misacylated Asp-tRNA(Asn) or Glu-tRNA(Gln) in organisms which lack either or both of asparaginyl-tRNA or glutaminyl-tRNA synthetases. The reaction takes place in the presence of glutamine and ATP through an activated phospho-Asp-tRNA(Asn) or phospho-Glu-tRNA(Gln). The sequence is that of Aspartyl/glutamyl-tRNA(Asn/Gln) amidotransferase subunit B from Synechococcus sp. (strain CC9605).